The sequence spans 219 residues: Resolvase (219 aa).

Residues 15 to 159 enclose the Resolvase/invertase-type recombinase catalytic domain; it reads VARIYLRAST…EDRRERQRQG (145 aa). The active-site O-(5'-phospho-DNA)-serine intermediate is Ser23.

This sequence belongs to the site-specific recombinase resolvase family.

Its function is as follows. Involved in plasmid partition. The sequence is that of Resolvase (parA) from Escherichia coli.